The sequence spans 247 residues: ATP synthase subunit a, chloroplastic (247 aa).

5 helical membrane-spanning segments follow: residues 38-58, 95-115, 134-154, 199-219, and 220-240; these read QVLI…TIAV, VPFI…GALL, INTT…AGLT, LVVV…VMLL, and GLFT…AYIG.

It belongs to the ATPase A chain family. In terms of assembly, F-type ATPases have 2 components, CF(1) - the catalytic core - and CF(0) - the membrane proton channel. CF(1) has five subunits: alpha(3), beta(3), gamma(1), delta(1), epsilon(1). CF(0) has four main subunits: a, b, b' and c.

The protein resides in the plastid. It localises to the chloroplast thylakoid membrane. Key component of the proton channel; it plays a direct role in the translocation of protons across the membrane. This is ATP synthase subunit a, chloroplastic from Nicotiana sylvestris (Wood tobacco).